The chain runs to 328 residues: GMP reductase (328 aa).

Cys-176 (thioimidate intermediate) is an active-site residue. Ile-205 to Val-228 is an NADP(+) binding site.

This sequence belongs to the IMPDH/GMPR family. GuaC type 2 subfamily.

The enzyme catalyses IMP + NH4(+) + NADP(+) = GMP + NADPH + 2 H(+). Functionally, catalyzes the irreversible NADPH-dependent deamination of GMP to IMP. It functions in the conversion of nucleobase, nucleoside and nucleotide derivatives of G to A nucleotides, and in maintaining the intracellular balance of A and G nucleotides. The polypeptide is GMP reductase (Shouchella clausii (strain KSM-K16) (Alkalihalobacillus clausii)).